The primary structure comprises 115 residues: NADH-ubiquinone oxidoreductase chain 3 (115 aa).

Helical transmembrane passes span 3-23 (FMLT…IAFW), 55-75 (FFLV…LLPL), and 84-104 (LEVM…SLAY).

It belongs to the complex I subunit 3 family. In terms of assembly, core subunit of respiratory chain NADH dehydrogenase (Complex I) which is composed of 45 different subunits. Interacts with TMEM186. Interacts with TMEM242.

The protein resides in the mitochondrion inner membrane. It carries out the reaction a ubiquinone + NADH + 5 H(+)(in) = a ubiquinol + NAD(+) + 4 H(+)(out). Its function is as follows. Core subunit of the mitochondrial membrane respiratory chain NADH dehydrogenase (Complex I) which catalyzes electron transfer from NADH through the respiratory chain, using ubiquinone as an electron acceptor. Essential for the catalytic activity of complex I. The sequence is that of NADH-ubiquinone oxidoreductase chain 3 from Rhinolophus pumilus (Horseshoe bat).